The sequence spans 241 residues: ATP synthase subunit a (241 aa).

The next 5 helical transmembrane spans lie at 30-50, 91-111, 128-148, 193-213, and 214-234; these read GQVFLTSWILLGALLVFISLG, FIGTLFLFVFVSNWGGALIPW, INTTIALALLVSLSYFYAGLS, LVVGVLVFLVPLILPIPVMFL, and GLFTSAIQALIFATLAAYYIG.

Belongs to the ATPase A chain family. F-type ATPases have 2 components, CF(1) - the catalytic core - and CF(0) - the membrane proton channel. CF(1) has five subunits: alpha(3), beta(3), gamma(1), delta(1), epsilon(1). CF(0) has four main subunits: a, b, b' and c.

The protein resides in the cellular thylakoid membrane. In terms of biological role, key component of the proton channel; it plays a direct role in the translocation of protons across the membrane. This chain is ATP synthase subunit a, found in Prochlorococcus marinus (strain MIT 9215).